The sequence spans 307 residues: D-alanine--D-alanine ligase (307 aa).

The ATP-grasp domain occupies 101 to 301 (RDVLAAAGVP…FGELVRWMVD (201 aa)). Residue 128-182 (LPPPYVIKPLGEGSSFGVFIVREDQAYPPQELTRSDWAFGNRVLVESYIGGRELT) participates in ATP binding. Positions 251, 268, and 270 each coordinate Mg(2+).

This sequence belongs to the D-alanine--D-alanine ligase family. Mg(2+) is required as a cofactor. The cofactor is Mn(2+).

Its subcellular location is the cytoplasm. The enzyme catalyses 2 D-alanine + ATP = D-alanyl-D-alanine + ADP + phosphate + H(+). The protein operates within cell wall biogenesis; peptidoglycan biosynthesis. Functionally, cell wall formation. This is D-alanine--D-alanine ligase from Beijerinckia indica subsp. indica (strain ATCC 9039 / DSM 1715 / NCIMB 8712).